We begin with the raw amino-acid sequence, 551 residues long: Glucose-6-phosphate isomerase (551 aa).

Glu349 serves as the catalytic Proton donor. Active-site residues include His378 and Lys480.

Belongs to the GPI family.

It is found in the cytoplasm. It carries out the reaction alpha-D-glucose 6-phosphate = beta-D-fructose 6-phosphate. It participates in carbohydrate biosynthesis; gluconeogenesis. The protein operates within carbohydrate degradation; glycolysis; D-glyceraldehyde 3-phosphate and glycerone phosphate from D-glucose: step 2/4. Functionally, catalyzes the reversible isomerization of glucose-6-phosphate to fructose-6-phosphate. This chain is Glucose-6-phosphate isomerase, found in Parasynechococcus marenigrum (strain WH8102).